A 154-amino-acid chain; its full sequence is Fimbrial protein (154 aa).

The propeptide at 1–6 is leader sequence; that stretch reads MKAQKG. At phenylalanine 7 the chain carries N-methylphenylalanine. Residues 7-27 form a helical membrane-spanning segment; the sequence is FTLIELMIVVAIIGILAAIAI. A disulfide bond links cysteine 133 and cysteine 151.

This sequence belongs to the N-Me-Phe pilin family. The pili are polar flexible filaments of about 5.4 nanometers diameter and 2.5 micrometers average length; they consist of only a single polypeptide chain arranged in a helical configuration of five subunits per turn in the assembled pilus.

Its subcellular location is the fimbrium. It localises to the membrane. The polypeptide is Fimbrial protein (pilA) (Pseudomonas aeruginosa).